A 293-amino-acid polypeptide reads, in one-letter code: 33 kDa chaperonin (293 aa).

2 disulfides stabilise this stretch: Cys235–Cys237 and Cys267–Cys270.

It belongs to the HSP33 family. Post-translationally, under oxidizing conditions two disulfide bonds are formed involving the reactive cysteines. Under reducing conditions zinc is bound to the reactive cysteines and the protein is inactive.

It is found in the cytoplasm. Redox regulated molecular chaperone. Protects both thermally unfolding and oxidatively damaged proteins from irreversible aggregation. Plays an important role in the bacterial defense system toward oxidative stress. In Deinococcus radiodurans (strain ATCC 13939 / DSM 20539 / JCM 16871 / CCUG 27074 / LMG 4051 / NBRC 15346 / NCIMB 9279 / VKM B-1422 / R1), this protein is 33 kDa chaperonin.